A 198-amino-acid chain; its full sequence is Chitin synthase 2 (198 aa).

This sequence belongs to the chitin synthase family. Class III subfamily.

The protein localises to the cell membrane. It carries out the reaction [(1-&gt;4)-N-acetyl-beta-D-glucosaminyl](n) + UDP-N-acetyl-alpha-D-glucosamine = [(1-&gt;4)-N-acetyl-beta-D-glucosaminyl](n+1) + UDP + H(+). Its function is as follows. Polymerizes chitin, a structural polymer of the cell wall and septum, by transferring the sugar moiety of UDP-GlcNAc to the non-reducing end of the growing chitin polymer. In Rhinocladiella atrovirens, this protein is Chitin synthase 2 (CHS2).